The primary structure comprises 228 residues: Ion-translocating oxidoreductase complex subunit E (228 aa).

5 consecutive transmembrane segments (helical) span residues 18–38, 69–89, 92–112, 125–145, and 182–202; these read ALVQLLGMCPLLAVTSTATNA, IPIYVMIIAAVVSIVQMLINA, FGLYQSLGIFIPLIVTNCIVV, LLSALDGFAIGLGATGAMFVL, and PFLLAMLPPGAFIGLGMMLAV.

Belongs to the NqrDE/RnfAE family. As to quaternary structure, the complex is composed of six subunits: RnfA, RnfB, RnfC, RnfD, RnfE and RnfG.

It localises to the cell inner membrane. In terms of biological role, part of a membrane-bound complex that couples electron transfer with translocation of ions across the membrane. This is Ion-translocating oxidoreductase complex subunit E from Cronobacter sakazakii (strain ATCC BAA-894) (Enterobacter sakazakii).